A 213-amino-acid chain; its full sequence is 5-deoxy-D-ribulose 1-phosphate aldolase (213 aa).

Residues 28 to 29 (GN), 45 to 46 (SG), and 74 to 76 (SSE) contribute to the substrate site. The active-site Proton donor/acceptor is E76. 4 residues coordinate Mn(2+): E76, H95, H97, and H157.

This sequence belongs to the aldolase class II family. As to quaternary structure, forms homooligomers, possibly homotetramers. Mn(2+) is required as a cofactor.

It catalyses the reaction 5-deoxy-D-ribulose 1-phosphate = dihydroxyacetone phosphate + acetaldehyde. The protein operates within carbohydrate degradation. Catalyzes the cleavage of 5-deoxy-D-ribulose 1-phosphate to yield dihydroxyacetone phosphate (DHAP) and acetaldehyde, as part of a 5-deoxyribose salvage pathway that recycles this toxic radical SAM enzyme by-product to mainstream metabolites. Is also able to catalyze the reverse reaction, using several aldehydes as substrate, with acetaldehyde being the preferred substrate. The sequence is that of 5-deoxy-D-ribulose 1-phosphate aldolase from Bacillus thuringiensis serovar kurstaki (strain ATCC 35866 / NRRL B-4488 / HD73).